The chain runs to 578 residues: Arginine--tRNA ligase (578 aa).

Residues 127–137 carry the 'HIGH' region motif; it reads PNLAKEMHVGH.

The protein belongs to the class-I aminoacyl-tRNA synthetase family. Monomer.

The protein resides in the cytoplasm. The catalysed reaction is tRNA(Arg) + L-arginine + ATP = L-arginyl-tRNA(Arg) + AMP + diphosphate. This is Arginine--tRNA ligase from Pseudomonas putida (strain ATCC 700007 / DSM 6899 / JCM 31910 / BCRC 17059 / LMG 24140 / F1).